The primary structure comprises 306 residues: Porphobilinogen deaminase (306 aa).

Cysteine 234 carries the post-translational modification S-(dipyrrolylmethanemethyl)cysteine.

Belongs to the HMBS family. As to quaternary structure, monomer. It depends on dipyrromethane as a cofactor.

The enzyme catalyses 4 porphobilinogen + H2O = hydroxymethylbilane + 4 NH4(+). It participates in porphyrin-containing compound metabolism; protoporphyrin-IX biosynthesis; coproporphyrinogen-III from 5-aminolevulinate: step 2/4. Functionally, tetrapolymerization of the monopyrrole PBG into the hydroxymethylbilane pre-uroporphyrinogen in several discrete steps. The sequence is that of Porphobilinogen deaminase from Mycobacteroides abscessus (strain ATCC 19977 / DSM 44196 / CCUG 20993 / CIP 104536 / JCM 13569 / NCTC 13031 / TMC 1543 / L948) (Mycobacterium abscessus).